The sequence spans 771 residues: Protein lin-54 homolog (771 aa).

2 disordered regions span residues 21 to 44 (AMDE…SAQV) and 68 to 105 (TNAK…IPSL). A compositionally biased stretch (low complexity) spans 72–92 (STTSSTTQLLLTPSSSSSTTT). Phosphoserine occurs at positions 288, 292, and 308. Residues 544 to 657 (PRKPCNCTRS…KCMGCKNFEE (114 aa)) enclose the CRC domain. A DNA-binding region spans residues 546-559 (KPCNCTRSQCLKLY). Cysteine 548, cysteine 550, cysteine 555, cysteine 560, cysteine 562, cysteine 569, cysteine 572, cysteine 574, and cysteine 577 together coordinate Zn(2+). The linker stretch occupies residues 606–619 (IGKGKEGESDRRHS). 9 residues coordinate Zn(2+): cysteine 622, cysteine 624, cysteine 629, cysteine 634, cysteine 636, cysteine 643, cysteine 647, cysteine 649, and cysteine 652. Residues 622-635 (CNCKKSGCLKNYCE) are DNA-binding.

Belongs to the lin-54 family. As to quaternary structure, component of the DREAM complex.

The protein localises to the nucleus. Component of the DREAM complex, a multiprotein complex that can both act as a transcription activator or repressor depending on the context. Specifically recognizes the consensus motif 5'-TTYRAA-3' in target DNA. This Danio rerio (Zebrafish) protein is Protein lin-54 homolog (lin54).